Consider the following 181-residue polypeptide: Large ribosomal subunit protein uL5 (181 aa).

It belongs to the universal ribosomal protein uL5 family. In terms of assembly, part of the 50S ribosomal subunit; part of the 5S rRNA/L5/L18/L25 subcomplex. Contacts the 5S rRNA and the P site tRNA. Forms a bridge to the 30S subunit in the 70S ribosome.

Its function is as follows. This is one of the proteins that bind and probably mediate the attachment of the 5S RNA into the large ribosomal subunit, where it forms part of the central protuberance. In the 70S ribosome it contacts protein S13 of the 30S subunit (bridge B1b), connecting the 2 subunits; this bridge is implicated in subunit movement. Contacts the P site tRNA; the 5S rRNA and some of its associated proteins might help stabilize positioning of ribosome-bound tRNAs. The protein is Large ribosomal subunit protein uL5 of Rickettsia canadensis (strain McKiel).